The primary structure comprises 221 residues: Iron-sulfur cluster repair protein YtfE (221 aa).

The protein belongs to the RIC family. YtfE subfamily. As to quaternary structure, homodimer.

It is found in the cytoplasm. In terms of biological role, di-iron-containing protein involved in the repair of iron-sulfur clusters damaged by oxidative and nitrosative stress conditions. The chain is Iron-sulfur cluster repair protein YtfE from Yersinia pestis bv. Antiqua (strain Antiqua).